Here is a 443-residue protein sequence, read N- to C-terminus: Protein SCAR (443 aa).

The interaction with brk1 and abiA stretch occupies residues 1 to 96 (MVLITRYLPS…DYHRNTSIDT (96 aa)). The stretch at 166-201 (VAEQQKLHEEARQRKRERREARLKKKGEKNEVEVKK) forms a coiled coil. Disordered regions lie at residues 176-197 (ARQR…KNEV) and 220-386 (INIE…RSDL). Positions 178–192 (QRKRERREARLKKKG) are enriched in basic residues. Positions 221-252 (NIESPHTSSPQIQHQSNNTATPQHTTQHFGTN) are enriched in polar residues. Low complexity-rich tracts occupy residues 263–277 (SQSS…INSY) and 285–305 (NTST…TGFN). Positions 306–323 (TPPPPMSNNNNMPPPPPM) are enriched in pro residues. Positions 324 to 338 (QQNGGAANNRLSVHN) are enriched in polar residues. The span at 346 to 365 (PAPPPPPPPPSAPAPPPPPM) shows a compositional bias: pro residues. Positions 382–399 (ARSDLLSSIMQGMALKPA) constitute a WH2 domain.

The protein belongs to the SCAR/WAVE family. In terms of assembly, part of a Scar/WAVE complex containing brk1, scrA, abiA, pirA and napA. Interacts with brk1 and abiA.

The protein resides in the cytoplasm. It localises to the cytoskeleton. It is found in the cell projection. The protein localises to the pseudopodium tip. Its subcellular location is the filopodium tip. Its function is as follows. Involved in regulation of actin and microtubule organization. Regulates phagocytosis and macropinocytosis. The sequence is that of Protein SCAR (scrA) from Dictyostelium discoideum (Social amoeba).